The sequence spans 504 residues: Putative arrestin-related trafficking adapter SPBC839.02 (504 aa).

The segment at 481–504 (QAPPPKYDDIFQSGSSHDENHDDN) is disordered.

Belongs to the ALY1 family.

Its function is as follows. May regulate endocytosis in response to extracellular stimuli. This Schizosaccharomyces pombe (strain 972 / ATCC 24843) (Fission yeast) protein is Putative arrestin-related trafficking adapter SPBC839.02.